The sequence spans 252 residues: Triosephosphate isomerase (252 aa).

Residue 10–12 (NWK) participates in substrate binding. The active-site Electrophile is the His-96. The Proton acceptor role is filled by Glu-168. Substrate-binding positions include Gly-174, Ser-214, and 235–236 (GG).

This sequence belongs to the triosephosphate isomerase family. In terms of assembly, homodimer.

It localises to the cytoplasm. It catalyses the reaction D-glyceraldehyde 3-phosphate = dihydroxyacetone phosphate. The protein operates within carbohydrate biosynthesis; gluconeogenesis. It participates in carbohydrate degradation; glycolysis; D-glyceraldehyde 3-phosphate from glycerone phosphate: step 1/1. Involved in the gluconeogenesis. Catalyzes stereospecifically the conversion of dihydroxyacetone phosphate (DHAP) to D-glyceraldehyde-3-phosphate (G3P). This Streptococcus gordonii (strain Challis / ATCC 35105 / BCRC 15272 / CH1 / DL1 / V288) protein is Triosephosphate isomerase.